We begin with the raw amino-acid sequence, 471 residues long: Chromosomal replication initiator protein DnaA (471 aa).

Residues 1–91 (MVDVSETTER…KYWQDESDAV (91 aa)) are domain I, interacts with DnaA modulators. A domain II region spans residues 91-133 (VYSVDICVSDGVGVQPQMAEHPDGAVDGPPVVMVGGTYDHLSS). Residues 134 to 352 (PLDPRFTFDN…GALNKVVAHS (219 aa)) are domain III, AAA+ region. ATP is bound by residues Gly180, Gly182, Lys183, and Thr184. A domain IV, binds dsDNA region spans residues 353–471 (SLVGRSVTIE…DINLLIRMLR (119 aa)).

This sequence belongs to the DnaA family. In terms of assembly, oligomerizes as a right-handed, spiral filament on DNA at oriC.

The protein localises to the cytoplasm. Functionally, plays an essential role in the initiation and regulation of chromosomal replication. ATP-DnaA binds to the origin of replication (oriC) to initiate formation of the DNA replication initiation complex once per cell cycle. Binds the DnaA box (a 9 base pair repeat at the origin) and separates the double-stranded (ds)DNA. Forms a right-handed helical filament on oriC DNA; dsDNA binds to the exterior of the filament while single-stranded (ss)DNA is stabiized in the filament's interior. The ATP-DnaA-oriC complex binds and stabilizes one strand of the AT-rich DNA unwinding element (DUE), permitting loading of DNA polymerase. After initiation quickly degrades to an ADP-DnaA complex that is not apt for DNA replication. Binds acidic phospholipids. The polypeptide is Chromosomal replication initiator protein DnaA (Anaplasma marginale (strain St. Maries)).